The primary structure comprises 180 residues: Type IV major pilin protein PilE1 (180 aa).

The propeptide occupies 1-7 (MNTLQKG). At Phe8 the chain carries N-methylphenylalanine. A helical transmembrane segment spans residues 8 to 28 (FTLIELMIVIAIVGILAAVAL). An O-linked (GlcNAc...) serine glycan is attached at Ser70. The cysteines at positions 128 and 160 are disulfide-linked.

Belongs to the N-Me-Phe pilin family. The pili are polar flexible filaments of about 5.4 nanometers diameter and 2.5 micrometers average length; they consist of only a single polypeptide chain arranged in a helical configuration of five subunits per turn in the assembled pilus.

The protein resides in the fimbrium. It localises to the membrane. Major component of the type IV pilus (T4P) that plays a role in cellular adherence, microcolony formation, resistance to neutrophil mediated killing, twitching motility as well as transformation. Mediates the attachment and the formation of bacterial microcolonies on host epithelial cells. Mechanistically, pili retractation induces host NF-kappa-B activation in infected cells, which is temporally associated with the formation of gonococcal microcolonies. The chain is Type IV major pilin protein PilE1 (pilE1) from Neisseria gonorrhoeae.